The chain runs to 162 residues: Shikimate kinase (162 aa).

11–16 is an ATP binding site; it reads GSGKSS. Ser-15 serves as a coordination point for Mg(2+). Substrate-binding residues include Asp-33, Arg-57, and Gly-80. Arg-116 provides a ligand contact to ATP. Arg-132 lines the substrate pocket.

It belongs to the shikimate kinase family. Monomer. It depends on Mg(2+) as a cofactor.

The protein localises to the cytoplasm. The enzyme catalyses shikimate + ATP = 3-phosphoshikimate + ADP + H(+). Its pathway is metabolic intermediate biosynthesis; chorismate biosynthesis; chorismate from D-erythrose 4-phosphate and phosphoenolpyruvate: step 5/7. Catalyzes the specific phosphorylation of the 3-hydroxyl group of shikimic acid using ATP as a cosubstrate. This chain is Shikimate kinase, found in Helicobacter pylori (strain P12).